A 402-amino-acid polypeptide reads, in one-letter code: Phosphoglycerate kinase (402 aa).

Residues D24–N26, R40, H63–R66, R122, and R155 each bind substrate. Residues K206, G297, E328, and G357–S360 each bind ATP.

This sequence belongs to the phosphoglycerate kinase family. As to quaternary structure, monomer.

The protein localises to the cytoplasm. The catalysed reaction is (2R)-3-phosphoglycerate + ATP = (2R)-3-phospho-glyceroyl phosphate + ADP. Its pathway is carbohydrate degradation; glycolysis; pyruvate from D-glyceraldehyde 3-phosphate: step 2/5. The polypeptide is Phosphoglycerate kinase (Synechococcus elongatus (strain ATCC 33912 / PCC 7942 / FACHB-805) (Anacystis nidulans R2)).